The primary structure comprises 286 residues: MAGAKEIRSKIASIKSTQKITSAMEKVAVSKMRKAQMRMAASRPYAERIRQVIGHLANANPEYLHPFMIERPLKRVGYVVVSSDRGLCGGLNTNLFKTLVKDMAVNRENGVEIDLCVVGSKGAAFFRNFGGNVVAAISHLGEEPSINDLIGSVKVMLDAYLDGRIDRLSVVSNKFINTMTQQPTVEQLIPLVATPDQGLKHHWDYLYEPDAKELLDGLMVRYVESQVYQAVVENNAAEQAARMIAMKNATDNAGDLISDLQLIYNKARQAAITQEISEIVGGAAAV.

It belongs to the ATPase gamma chain family. F-type ATPases have 2 components, CF(1) - the catalytic core - and CF(0) - the membrane proton channel. CF(1) has five subunits: alpha(3), beta(3), gamma(1), delta(1), epsilon(1). CF(0) has three main subunits: a, b and c.

The protein localises to the cell inner membrane. Functionally, produces ATP from ADP in the presence of a proton gradient across the membrane. The gamma chain is believed to be important in regulating ATPase activity and the flow of protons through the CF(0) complex. This chain is ATP synthase gamma chain, found in Pseudomonas syringae pv. tomato (strain ATCC BAA-871 / DC3000).